We begin with the raw amino-acid sequence, 345 residues long: Type II methyltransferase M.AplI (345 aa).

Residues 25–325 (LVVLDLFAGC…KSVKMTLENK (301 aa)) enclose the SAM-dependent MTase C5-type domain. Cys93 is an active-site residue.

This sequence belongs to the class I-like SAM-binding methyltransferase superfamily. C5-methyltransferase family.

The enzyme catalyses a 2'-deoxycytidine in DNA + S-adenosyl-L-methionine = a 5-methyl-2'-deoxycytidine in DNA + S-adenosyl-L-homocysteine + H(+). Functionally, a methylase, recognizes the double-stranded sequence 5'-CTGCAG-3', methylates C-4 on both strands, and protects the DNA from cleavage by the AplI endonuclease. This Arthrospira platensis (strain NIES-39 / UTEX 3086 / IAM M-135) (Spirulina platensis) protein is Type II methyltransferase M.AplI (aplIM).